The following is a 417-amino-acid chain: Tumor necrosis factor receptor superfamily member 25 (417 aa).

An N-terminal signal peptide occupies residues 1 to 24 (MEQRPRGCAAVAAALLLVLLGARA). Topologically, residues 25-199 (QGGTRSPRCD…RCAAVCGWRQ (175 aa)) are extracellular. TNFR-Cys repeat units follow at residues 34-71 (DCAG…STCL), 72-115 (VCPQ…DTRC), 116-163 (GCKP…TDCG), and 164-192 (TCLP…ERCA). 12 disulfide bridges follow: Cys35/Cys47, Cys48/Cys61, Cys51/Cys70, Cys73/Cys89, Cys92/Cys107, Cys95/Cys115, Cys117/Cys130, Cys138/Cys155, Cys141/Cys162, Cys165/Cys176, Cys179/Cys191, and Cys187/Cys195. Residue Asn67 is glycosylated (N-linked (GlcNAc...) asparagine). A glycan (N-linked (GlcNAc...) asparagine) is linked at Asn106. A helical membrane pass occupies residues 200 to 220 (MFWVQVLLAGLVVPLLLGATL). The Cytoplasmic segment spans residues 221-417 (TYTYRHCWPH…DLRSRLQRGP (197 aa)). The Death domain occupies 332–413 (GPQLYDVMDA…GCVEDLRSRL (82 aa)). Arg352 is a glycosylation site ((Microbial infection) N-beta-linked (GlcNAc) arginine).

Homodimer. Interacts strongly via the death domains with TNFRSF1 and TRADD to activate at least two distinct signaling cascades, apoptosis and NF-kappa-B signaling. Interacts with BAG4. In terms of processing, (Microbial infection) Glycosylated at Arg-352 by enteropathogenic E.coli protein NleB1. Glycosylated. In terms of tissue distribution, abundantly expressed in thymocytes and lymphocytes. Detected in lymphocyte-rich tissues such as thymus, colon, intestine, and spleen. Also found in the prostate.

The protein localises to the cell membrane. It is found in the secreted. Receptor for TNFSF12/APO3L/TWEAK. Interacts directly with the adapter TRADD. Mediates activation of NF-kappa-B and induces apoptosis. May play a role in regulating lymphocyte homeostasis. This Homo sapiens (Human) protein is Tumor necrosis factor receptor superfamily member 25 (TNFRSF25).